Reading from the N-terminus, the 187-residue chain is Ribosome-recycling factor (187 aa).

It belongs to the RRF family.

It localises to the cytoplasm. Responsible for the release of ribosomes from messenger RNA at the termination of protein biosynthesis. May increase the efficiency of translation by recycling ribosomes from one round of translation to another. The polypeptide is Ribosome-recycling factor (Orientia tsutsugamushi (strain Ikeda) (Rickettsia tsutsugamushi)).